A 144-amino-acid chain; its full sequence is Transcriptional regulator MraZ (144 aa).

2 SpoVT-AbrB domains span residues 6–48 and 77–120; these read TYTP…PTDV and ADEG…DPVR.

This sequence belongs to the MraZ family. In terms of assembly, forms oligomers.

Its subcellular location is the cytoplasm. It is found in the nucleoid. The protein is Transcriptional regulator MraZ of Nocardioides sp. (strain ATCC BAA-499 / JS614).